Consider the following 496-residue polypeptide: Serine/threonine-protein kinase chk1 (496 aa).

Positions 10 to 272 constitute a Protein kinase domain; sequence YHIGREIGTG…VKHVVQHPWL (263 aa). ATP is bound by residues 16-24 and Lys38; that span reads IGTGAFASV. Asp137 serves as the catalytic Proton acceptor.

Belongs to the protein kinase superfamily. CAMK Ser/Thr protein kinase family. NIM1 subfamily. Interacts with crb2. Interacts with rad3. Interacts with rfp1. Phosphorylated.

Its subcellular location is the nucleus. It carries out the reaction L-seryl-[protein] + ATP = O-phospho-L-seryl-[protein] + ADP + H(+). The catalysed reaction is L-threonyl-[protein] + ATP = O-phospho-L-threonyl-[protein] + ADP + H(+). Its function is as follows. Serine/threonine-protein kinase which is required for checkpoint-mediated cell cycle arrest and activation of DNA repair in response to the presence of DNA damage or unreplicated DNA. May also negatively regulate cell cycle progression during unperturbed cell cycles. Binds to and phosphorylates CDC25. This leads to negative regulation of CDC25 and prevents mitotic entry. This is Serine/threonine-protein kinase chk1 (chk1) from Schizosaccharomyces pombe (strain 972 / ATCC 24843) (Fission yeast).